A 455-amino-acid chain; its full sequence is tRNA modification GTPase MnmE (455 aa).

Residues Arg-24, Glu-81, and Lys-120 each contribute to the (6S)-5-formyl-5,6,7,8-tetrahydrofolate site. Residues 216 to 378 (GMTVVIAGRP…LREHLKACMG (163 aa)) enclose the TrmE-type G domain. Residue Asn-226 coordinates K(+). GTP contacts are provided by residues 226–231 (NAGKSS), 245–251 (TDIAGTT), 270–273 (DTAG), 335–338 (NKAD), and 359–361 (SAR). Mg(2+) is bound at residue Ser-230. Residues Thr-245, Ile-247, and Thr-250 each contribute to the K(+) site. A Mg(2+)-binding site is contributed by Thr-251. Lys-455 provides a ligand contact to (6S)-5-formyl-5,6,7,8-tetrahydrofolate.

It belongs to the TRAFAC class TrmE-Era-EngA-EngB-Septin-like GTPase superfamily. TrmE GTPase family. In terms of assembly, homodimer. Heterotetramer of two MnmE and two MnmG subunits. Requires K(+) as cofactor.

The protein localises to the cytoplasm. Functionally, exhibits a very high intrinsic GTPase hydrolysis rate. Involved in the addition of a carboxymethylaminomethyl (cmnm) group at the wobble position (U34) of certain tRNAs, forming tRNA-cmnm(5)s(2)U34. The chain is tRNA modification GTPase MnmE from Pseudomonas aeruginosa (strain ATCC 15692 / DSM 22644 / CIP 104116 / JCM 14847 / LMG 12228 / 1C / PRS 101 / PAO1).